Here is a 160-residue protein sequence, read N- to C-terminus: uncharacterized protein (160 aa).

Positions 5-160 (ISLSFYKPEH…GEQLILHHFL (156 aa)) constitute an N-acetyltransferase domain.

This is an uncharacterized protein from Bacillus subtilis (strain 168).